The following is a 156-amino-acid chain: SsrA-binding protein (156 aa).

It belongs to the SmpB family.

The protein localises to the cytoplasm. Required for rescue of stalled ribosomes mediated by trans-translation. Binds to transfer-messenger RNA (tmRNA), required for stable association of tmRNA with ribosomes. tmRNA and SmpB together mimic tRNA shape, replacing the anticodon stem-loop with SmpB. tmRNA is encoded by the ssrA gene; the 2 termini fold to resemble tRNA(Ala) and it encodes a 'tag peptide', a short internal open reading frame. During trans-translation Ala-aminoacylated tmRNA acts like a tRNA, entering the A-site of stalled ribosomes, displacing the stalled mRNA. The ribosome then switches to translate the ORF on the tmRNA; the nascent peptide is terminated with the 'tag peptide' encoded by the tmRNA and targeted for degradation. The ribosome is freed to recommence translation, which seems to be the essential function of trans-translation. In Staphylococcus haemolyticus (strain JCSC1435), this protein is SsrA-binding protein.